A 172-amino-acid chain; its full sequence is Propanediol dehydratase small subunit (172 aa).

Belongs to the diol/glycerol dehydratase small subunit family. As to quaternary structure, the propanediol dehydratase enzyme is a heterotrimeric complex composed of a large (PduC), a medium (PduD) and a small (PduE) subunit. Requires adenosylcob(III)alamin as cofactor.

It localises to the bacterial microcompartment. It catalyses the reaction propane-1,2-diol = propanal + H2O. Its pathway is polyol metabolism; 1,2-propanediol degradation. Its function is as follows. Part of the PduCDE complex that catalyzes the dehydration of 1,2-propanediol (1,2-PD) to propionaldehyde. Localized in the bacterial microcompartment (BMC) dedicated to 1,2-PD degradation. In terms of biological role, expression of a cosmid containing the full 21-gene pdu operon in E.coli allows E.coli to grow on 1,2-propanediol (1,2-PD) with the appearance of BMCs in its cytoplasm. The 1,2-PD-specific bacterial microcompartment (BMC) concentrates low levels of 1,2-PD catabolic enzymes, concentrates volatile reaction intermediates thus enhancing pathway flux and keeps the level of toxic, mutagenic propionaldehyde low. This chain is Propanediol dehydratase small subunit, found in Citrobacter freundii.